We begin with the raw amino-acid sequence, 92 residues long: MSRSIHKGPFIDVSLLTRIEALNTSGKKEVIKTWSRASTIIPDMIGHTIAVYNGKQHFPVFVSDQMVGHKLGEFVPTRTFRTHVKGDRKARR.

Belongs to the universal ribosomal protein uS19 family.

It is found in the plastid. Its subcellular location is the chloroplast. Its function is as follows. Protein S19 forms a complex with S13 that binds strongly to the 16S ribosomal RNA. The protein is Small ribosomal subunit protein uS19c (rps19) of Porphyra purpurea (Red seaweed).